The sequence spans 137 residues: Sporulation-specific cell division protein SsgB (137 aa).

The protein belongs to the SsgA family. Interacts with SsgA. Interacts with FtsZ (via N-terminus).

It localises to the cell septum. In terms of biological role, involved in sporulation-specific cell division. Required for early stages of sporulation. Important in the process of growth cessation prior to sporulation-specific cell division. Recruits cell division protein FtsZ to the future septum sites and tethers the contractile ring structure (Z ring) to the cytoplasmic membrane during sporulation. Stimulates polymerization and filament length of FtsZ in vitro. The polypeptide is Sporulation-specific cell division protein SsgB (Streptomyces coelicolor (strain ATCC BAA-471 / A3(2) / M145)).